Here is an 860-residue protein sequence, read N- to C-terminus: MYSGAGPVLASPAPTTSPIPGYAFKPPPRPDFGTTGRTIKLQANFFEMDIPKIDIYHYELDIKPEKCPRRVNREIVEHMVQHFKTQIFGDRKPVFDGRKNLYTAMPLPIGRDKVELEVTLPGEGKDRIFKVSIKWVSCVSLQALHDALSGRLPSVPFETIQALDVVMRHLPSMRYTPVGRSFFTASEGCSNPLGGGREVWFGFHQSVRPSLWKMMLNIDVSATAFYKAQPVIEFVCEVLDFKSIEEQQKPLTDSQRVKFTKEIKGLKVEITHCGQMKRKYRVCNVTRRPASHQTFPLQQESGQTVECTVAQYFKDRHKLVLRYPHLPCLQVGQEQKHTYLPLEVCNIVAGQRCIKKLTDNQTSTMIRATARSAPDRQEEISKLMRSASFNTDPYVREFGIMVKDEMTDVTGRVLQPPSILYGGRNKAIATPVQGVWDMRNKQFHTGIEIKVWAIACFAPQRQCTEVHLKSFTEQLRKISRDAGMPIQGQPCFCKYAQGADSVEPMFRHLKNTYAGLQLVVVILPGKTPVYAEVKRVGDTVLGMATQCVQMKNVQRTTPQTLSNLCLKINVKLGGVNNILLPQGRPPVFQQPVIFLGADVTHPPAGDGKKPSIAAVVGSMDAHPNRYCATVRVQQHRQEIIQDLAAMVRELLIQFYKSTRFKPTRIIFYRDGVSEGQFQQVLHHELLAIREACIKLEKDYQPGITFIVVQKRHHTRLFCTDKNERVGKSGNIPAGTTVDTKITHPTEFDFYLCSHAGIQGTSRPSHYHVLWDDNRFSSDELQILTYQLCHTYVRCTRSVSIPAPAYYAHLVAFRARYHLVDKEHDSAEGSHTSGQSNGRDHQALAKAVQVHQDTLRTMYFA.

Tyrosine 2 is subject to 3'-nitrotyrosine. Positions 230–349 (PVIEFVCEVL…LPLEVCNIVA (120 aa)) constitute a PAZ domain. An interaction with guide RNA region spans residues 312–317 (YFKDRH). Serine 388 is subject to Phosphoserine. The region spanning 518–819 (LVVVILPGKT…VAFRARYHLV (302 aa)) is the Piwi domain. Positions 525-567 (GKTPVYAEVKRVGDTVLGMATQCVQMKNVQRTTPQTLSNLCLK) are interaction with guide RNA. The tract at residues 588 to 591 (FQQP) is interaction with GW182 family members. Aspartate 598 provides a ligand contact to a divalent metal cation. Residues 651 to 661 (LIQFYKSTRFK) are interaction with GW182 family members. Aspartate 670 contacts a divalent metal cation. The residue at position 701 (proline 701) is a 4-hydroxyproline. 3 interaction with guide RNA regions span residues 710–711 (KR), 754–762 (HAGIQGTSR), and 791–813 (YVRCTRSVSIPAPAYYAHLVAFR). Histidine 808 provides a ligand contact to a divalent metal cation. Phosphoserine is present on residues serine 825, serine 829, serine 832, and serine 835.

It belongs to the argonaute family. Ago subfamily. As to quaternary structure, interacts with DICER1 through its Piwi domain and with TARBP2 during assembly of the RNA-induced silencing complex (RISC). Together, DICER1, AGO2 and TARBP2 constitute the trimeric RISC loading complex (RLC), or micro-RNA (miRNA) loading complex (miRLC). Within the RLC/miRLC, DICER1 and TARBP2 are required to process precursor miRNAs (pre-miRNAs) to mature miRNAs and then load them onto AGO2. AGO2 bound to the mature miRNA constitutes the minimal RISC and may subsequently dissociate from DICER1 and TARBP2. Note however that the term RISC has also been used to describe the trimeric RLC/miRLC. The formation of RISC complexes containing siRNAs rather than miRNAs appears to occur independently of DICER1. Interacts with AGO1. Also interacts with DDB1, DDX5, DDX6, DDX20, DHX30, DHX36, DDX47, DHX9, ELAVL, FXR1, GEMIN4, HNRNPF, IGF2BP1, ILF3, IMP8, MATR3, PABPC1, PRMT5, P4HA1, P4HB, RBM4, SART3, TNRC6A, TNRC6B, UPF1 and YBX1. Interacts with the P-body components DCP1A and XRN1. Associates with polysomes and messenger ribonucleoproteins (mNRPs). Interacts with RBM4; the interaction is modulated under stress-induced conditions, occurs under both cell proliferation and differentiation conditions and in an RNA- and phosphorylation-independent manner. Interacts with LIMD1, WTIP and AJUBA. Interacts with TRIM71. Interacts with APOBEC3G in an RNA-dependent manner. Interacts with APOBEC3A, APOBEC3C, APOBEC3F and APOBEC3H. Interacts with DICER1, TARBP2, EIF6, MOV10 and RPL7A (60S ribosome subunit); they form a large RNA-induced silencing complex (RISC). Interacts with FMR1. Interacts with ZFP36. Interacts with RC3H1; the interaction is RNA independent. Interacts with ARB2A. Found in a complex composed of AGO2, CHD7 and ARB2A. Interacts with SND1 and SYT11. Interacts with CLNK. Interacts with GARRE1. Interacts with GRB2; this interaction is important for the formation of a ternary complex containing GRB2, AGO2 and DICER1. Mg(2+) serves as cofactor. It depends on Mn(2+) as a cofactor. Post-translationally, hydroxylated. 4-hydroxylation appears to enhance protein stability but is not required for miRNA-binding or endonuclease activity. In terms of processing, ubiquitinated on surface-exposed lysines by a SCF-like E3 ubiquitin-protein ligase complex containing ZSWIM8 during target-directed microRNA degradation (TDMD), a process that mediates degradation of microRNAs (miRNAs). Ubiquitination by the SCF-like E3 ubiquitin-protein ligase complex containing ZSWIM8 leads to its subsequent degradation, thereby exposing miRNAs for degradation. ZSWIM8 recognizes and binds AGO2 when it is engaged with a TDMD target. Phosphorylation at Ser-388 by AKT3; leads to up-regulate translational repression of microRNA target and down-regulate endonucleolytic cleavage. Post-translationally, a phosphorylation cycle of C-terminal serine cluster (Ser-825-Ser-835) regulates the release of target mRNAs. Target-binding leads to phosphorylation of these residues by CSNK1A1, which reduces the affinity of AGO2 for mRNA and enables target release. The ANKRD52-PPP6C phosphatase complex dephosphorylates the residues, which primes AGO2 for binding a new target. As to expression, ubiquitous expression in 9.5 day embryos with highest levels in forebrain, heart, limb buds, and branchial arches.

It is found in the cytoplasm. It localises to the P-body. The protein localises to the nucleus. The catalysed reaction is Endonucleolytic cleavage to 5'-phosphomonoester.. Its function is as follows. Required for RNA-mediated gene silencing (RNAi) by the RNA-induced silencing complex (RISC). The 'minimal RISC' appears to include AGO2 bound to a short guide RNA such as a microRNA (miRNA) or short interfering RNA (siRNA). These guide RNAs direct RISC to complementary mRNAs that are targets for RISC-mediated gene silencing. The precise mechanism of gene silencing depends on the degree of complementarity between the miRNA or siRNA and its target. Binding of RISC to a perfectly complementary mRNA generally results in silencing due to endonucleolytic cleavage of the mRNA specifically by AGO2. Binding of RISC to a partially complementary mRNA results in silencing through inhibition of translation, and this is independent of endonuclease activity. May inhibit translation initiation by binding to the 7-methylguanosine cap, thereby preventing the recruitment of the translation initiation factor eIF4-E. May also inhibit translation initiation via interaction with EIF6, which itself binds to the 60S ribosomal subunit and prevents its association with the 40S ribosomal subunit. The inhibition of translational initiation leads to the accumulation of the affected mRNA in cytoplasmic processing bodies (P-bodies), where mRNA degradation may subsequently occur. In some cases RISC-mediated translational repression is also observed for miRNAs that perfectly match the 3' untranslated region (3'-UTR). Can also up-regulate the translation of specific mRNAs under certain growth conditions. Binds to the AU element of the 3'-UTR of the TNF (TNF-alpha) mRNA and up-regulates translation under conditions of serum starvation. Also required for transcriptional gene silencing (TGS), in which short RNAs known as antigene RNAs or agRNAs direct the transcriptional repression of complementary promoter regions. Regulates lymphoid and erythroid development and function, and this is independent of endonuclease activity. In Mus musculus (Mouse), this protein is Protein argonaute-2 (Ago2).